Reading from the N-terminus, the 396-residue chain is Putative glutamate--cysteine ligase 2-2 (396 aa).

This sequence belongs to the glutamate--cysteine ligase type 2 family. YbdK subfamily.

The enzyme catalyses L-cysteine + L-glutamate + ATP = gamma-L-glutamyl-L-cysteine + ADP + phosphate + H(+). In terms of biological role, ATP-dependent carboxylate-amine ligase which exhibits weak glutamate--cysteine ligase activity. The chain is Putative glutamate--cysteine ligase 2-2 from Mycolicibacterium smegmatis (strain ATCC 700084 / mc(2)155) (Mycobacterium smegmatis).